A 116-amino-acid chain; its full sequence is uncharacterized protein (116 aa).

This is an uncharacterized protein from Invertebrate iridescent virus 6 (IIV-6).